Reading from the N-terminus, the 501-residue chain is Aspartate--tRNA ligase, cytoplasmic (501 aa).

A Phosphothreonine modification is found at threonine 52. N6-acetyllysine is present on lysine 74. Glutamate 229 provides a ligand contact to L-aspartate. Position 249 is a phosphoserine (serine 249). The aspartate stretch occupies residues 251–254; the sequence is QLYK. Arginine 273 lines the L-aspartate pocket. ATP contacts are provided by residues 273–275 and 281–283; these read RAE and RHL. N6-acetyllysine is present on lysine 374. Glutamate 424 serves as a coordination point for ATP. Positions 427 and 431 each coordinate L-aspartate. An ATP-binding site is contributed by 472–475; it reads GLER.

It belongs to the class-II aminoacyl-tRNA synthetase family. Type 2 subfamily. In terms of assembly, homodimer. Part of a multisubunit complex that groups tRNA ligases for Arg (RARS1), Asp (DARS1), Gln (QARS1), Ile (IARS1), Leu (LARS1), Lys (KARS1), Met (MARS1) the bifunctional ligase for Glu and Pro (EPRS1) and the auxiliary subunits AIMP1/p43, AIMP2/p38 and EEF1E1/p18.

It localises to the cytoplasm. It catalyses the reaction tRNA(Asp) + L-aspartate + ATP = L-aspartyl-tRNA(Asp) + AMP + diphosphate. In terms of biological role, catalyzes the specific attachment of an amino acid to its cognate tRNA in a 2 step reaction: the amino acid (AA) is first activated by ATP to form AA-AMP and then transferred to the acceptor end of the tRNA. The polypeptide is Aspartate--tRNA ligase, cytoplasmic (Dars1) (Mus musculus (Mouse)).